The sequence spans 72 residues: Putative membrane protein insertion efficiency factor (72 aa).

Belongs to the UPF0161 family.

It is found in the cell inner membrane. Its function is as follows. Could be involved in insertion of integral membrane proteins into the membrane. This Myxococcus xanthus (strain DK1622) protein is Putative membrane protein insertion efficiency factor.